The sequence spans 92 residues: Small ribosomal subunit protein uS19c (92 aa).

It belongs to the universal ribosomal protein uS19 family.

The protein resides in the plastid. Its subcellular location is the chloroplast. Functionally, protein S19 forms a complex with S13 that binds strongly to the 16S ribosomal RNA. This Anthoceros angustus (Hornwort) protein is Small ribosomal subunit protein uS19c (rps19).